The chain runs to 184 residues: GTP-binding protein Rheb (184 aa).

Lys8 participates in a covalent cross-link: Glycyl lysine isopeptide (Lys-Gly) (interchain with G-Cter in ubiquitin). GDP-binding residues include Ser16, Val17, Gly18, Lys19, Ser20, Ser21, Val32, and Asp33. GTP-binding residues include Ser16, Val17, Gly18, Lys19, Ser20, Ser21, Val32, Asp33, Tyr35, Pro37, Thr38, Gly63, Asn119, Lys120, and Asp122. Residue Ser20 coordinates Mg(2+). The Effector region signature appears at 35–43 (YDPTIENTF). Thr38 lines the Mg(2+) pocket. Residue Asn119 participates in GDP binding. Asp122 provides a ligand contact to GDP. Ser130 carries the post-translational modification Phosphoserine; by MAPKAPK5. Residue Ala150 participates in GDP binding. Ala150 is a binding site for GTP. Residue Cys181 is modified to Cysteine methyl ester. Cys181 carries the S-farnesyl cysteine lipid modification. Residues 182–184 (SVM) constitute a propeptide, removed in mature form.

It belongs to the small GTPase superfamily. Rheb family. Associates with the mTORC1 complex (MTOR, MLST8 and RPTOR) in a guanyl nucleotide-independent manner. Interacts with TSC2. Interacts with MCRS1; the interaction maintains RHEB at the lysosome in its active GTP-bound form and prevents its interaction with the mTORC1 complex inhibitor TSC2, ensuring activation of the mTORC1 complex by RHEB. Interacts (when prenylated) with PDE6D; this promotes release from membranes. Post-translationally, farnesylation is important for efficiently activating mTORC1-mediated signaling. Polyubiquitinated in response to amino acid, promoting its interaction with MTOR and mTORC1 activation. Deubiquitination by ATXN3 promotes recruitment of the TSC-TBC complex and RHEB inactivation by TSC2. Monoubiquitinated at Lys-8 by RNF152, promoting its association with the TSC-TBC complex. Deubiquitinated at Lys-8 by USP4, promoting mTORC1 activation. In terms of processing, phosphorylation by MAPKAPK5 impairs GTP-binding and inactivation.

It is found in the endomembrane system. Its subcellular location is the lysosome membrane. It localises to the golgi apparatus membrane. The protein localises to the endoplasmic reticulum membrane. The protein resides in the cytoplasm. It is found in the cytosol. It carries out the reaction GTP + H2O = GDP + phosphate + H(+). Its activity is regulated as follows. Alternates between an inactive form bound to GDP and an active form bound to GTP. Inactivated by the TSC-TBC complex via the GTPase activating protein (GAP) domain of TSC2. Autoinhibited by Tyr-35, which constrains the active site conformation, restricting the access of the catalytic Asp-65 to the nucleotide-binding pocket. In terms of biological role, small GTPase that acts as an allosteric activator of the canonical mTORC1 complex, an evolutionarily conserved central nutrient sensor that stimulates anabolic reactions and macromolecule biosynthesis to promote cellular biomass generation and growth. In response to nutrients, growth factors or amino acids, specifically activates the protein kinase activity of MTOR, the catalytic component of the mTORC1 complex: acts by causing a conformational change that allows the alignment of residues in the active site of MTOR, thereby enhancing the phosphorylation of ribosomal protein S6 kinase (RPS6KB1 and RPS6KB2) and EIF4EBP1 (4E-BP1). RHEB is also required for localization of the TSC-TBC complex to lysosomal membranes. In response to starvation, RHEB is inactivated by the TSC-TBC complex, preventing activation of mTORC1. Has low intrinsic GTPase activity. The sequence is that of GTP-binding protein Rheb from Mus musculus (Mouse).